Here is a 79-residue protein sequence, read N- to C-terminus: Small ribosomal subunit protein uS17 (79 aa).

The protein belongs to the universal ribosomal protein uS17 family. As to quaternary structure, part of the 30S ribosomal subunit.

Functionally, one of the primary rRNA binding proteins, it binds specifically to the 5'-end of 16S ribosomal RNA. The protein is Small ribosomal subunit protein uS17 of Rhizobium rhizogenes (strain K84 / ATCC BAA-868) (Agrobacterium radiobacter).